The sequence spans 199 residues: uncharacterized protein (199 aa).

This is an uncharacterized protein from Connochaetes taurinus (Blue wildebeest).